We begin with the raw amino-acid sequence, 375 residues long: ATP-sensitive inward rectifier potassium channel 15 (375 aa).

Topologically, residues 1–60 (MDAIHLGMSSAPLVKHTNGVGLKAHRPRVMSKSGHSNVRIDKVDGIYLLYLQDLWTTVID) are cytoplasmic. Residues 61-87 (MKWRYKLTLFAATFVMTWFLFGVVYYA) traverse the membrane as a helical segment. The Extracellular portion of the chain corresponds to 88–113 (IAFIHGDLQLGESNSNHTPCIMKVDS). Residues 114 to 130 (LTGAFLFSLESQTTIGY) constitute an intramembrane region (helical; Pore-forming). The Selectivity filter motif lies at 127–132 (TIGYGV). Topologically, residues 131 to 139 (GVRSITEEC) are extracellular. Residues 140–165 (PHAIFLLVAQLVITTLIEIFITGTFL) traverse the membrane as a helical segment. The Cytoplasmic segment spans residues 166–375 (AKIARPKKRA…RSLLLQQSNV (210 aa)).

Belongs to the inward rectifier-type potassium channel (TC 1.A.2.1) family. KCNJ15 subfamily. Can form heteromultimeric channels with Kir5.1/KCNJ16. Interacts with PATJ. Expressed in the proximal segment of the nephron.

The protein resides in the membrane. It is found in the cell membrane. It carries out the reaction K(+)(in) = K(+)(out). With respect to regulation, channel activity is regulated by variations of cytosolic pH; reversibly inhibited by acidic pH values. Inhibited by Ba(2+) and Cs(+) in a voltage-dependent manner. Inward rectifier potassium channels are characterized by a greater tendency to allow potassium to flow into the cell rather than out of it. Their voltage dependence is regulated by the concentration of extracellular potassium; as external potassium is raised, the voltage range of the channel opening shifts to more positive voltages. The inward rectification is mainly due to the blockage of outward current by internal magnesium. The protein is ATP-sensitive inward rectifier potassium channel 15 (Kcnj15) of Mus musculus (Mouse).